The primary structure comprises 930 residues: Isoleucine--tRNA ligase (930 aa).

The 'HIGH' region signature appears at 57–67 (PYANGNIHVGH). L-isoleucyl-5'-AMP is bound at residue glutamate 554. The 'KMSKS' region signature appears at 595–599 (KMSKS). Lysine 598 is an ATP binding site. 4 residues coordinate Zn(2+): cysteine 888, cysteine 891, cysteine 908, and cysteine 911.

Belongs to the class-I aminoacyl-tRNA synthetase family. IleS type 1 subfamily. As to quaternary structure, monomer. Zn(2+) serves as cofactor.

It is found in the cytoplasm. The enzyme catalyses tRNA(Ile) + L-isoleucine + ATP = L-isoleucyl-tRNA(Ile) + AMP + diphosphate. Catalyzes the attachment of isoleucine to tRNA(Ile). As IleRS can inadvertently accommodate and process structurally similar amino acids such as valine, to avoid such errors it has two additional distinct tRNA(Ile)-dependent editing activities. One activity is designated as 'pretransfer' editing and involves the hydrolysis of activated Val-AMP. The other activity is designated 'posttransfer' editing and involves deacylation of mischarged Val-tRNA(Ile). This is Isoleucine--tRNA ligase from Streptococcus pneumoniae (strain ATCC 700669 / Spain 23F-1).